Reading from the N-terminus, the 359-residue chain is Bergaptol O-methyltransferase (359 aa).

His-126 is a bergaptol binding site. S-adenosyl-L-homocysteine-binding residues include Ser-179, Gly-203, Asp-226, Asp-246, and Lys-260. His-264 is a binding site for bergaptol. His-264 functions as the Proton acceptor in the catalytic mechanism.

The protein belongs to the class I-like SAM-binding methyltransferase superfamily. Cation-independent O-methyltransferase family. COMT subfamily. In terms of assembly, homodimer. In terms of tissue distribution, mostly expressed in roots and, to a lower extent, in stems and leaves.

The protein localises to the cytoplasm. It carries out the reaction bergaptol + S-adenosyl-L-methionine = bergapten + S-adenosyl-L-homocysteine. Its pathway is aromatic compound metabolism. It participates in secondary metabolite biosynthesis. Functionally, O-methyltransferase involved in the biosynthesis of furocoumarins natural products such as bergapten, a photosensitizer used for medical purpose such as treating psoriasis and vitiligo or facilitating resistance to microbial infection and other stresses. Catalyzes specifically the methylation of bergaptol. Not active on xanthotol, isoscopoletin, scopoletin and esculetin. In Kitagawia praeruptora (Peucedanum praeruptorum), this protein is Bergaptol O-methyltransferase.